The chain runs to 1405 residues: Xanthine dehydrogenase (1405 aa).

In terms of domain architecture, 2Fe-2S ferredoxin-type spans 17–104; it reads NKLTFYVNGV…GKHLITVEGI (88 aa). [2Fe-2S] cluster-binding residues include cysteine 56, cysteine 61, cysteine 64, cysteine 86, cysteine 125, cysteine 128, cysteine 161, and cysteine 163. One can recognise an FAD-binding PCMH-type domain in the interval 288 to 474; sequence FGNEQKVWFR…TKIFVPETVP (187 aa). FAD-binding positions include 316–323, phenylalanine 397, 407–411, aspartate 420, isoleucine 464, and lysine 483; these read IVGGASEI and TPAGN. Glutamine 833 and phenylalanine 864 together coordinate Mo-molybdopterin. 2 residues coordinate substrate: glutamate 868 and arginine 946. Arginine 978 contacts Mo-molybdopterin. Phenylalanine 980 serves as a coordination point for substrate. Alanine 1147 is a binding site for Mo-molybdopterin. Glutamate 1333 (proton acceptor) is an active-site residue.

This sequence belongs to the xanthine dehydrogenase family. In terms of assembly, homodimer. Mo-molybdopterin serves as cofactor. It depends on [2Fe-2S] cluster as a cofactor. Requires FAD as cofactor.

The protein resides in the cytoplasm. The catalysed reaction is hypoxanthine + NAD(+) + H2O = xanthine + NADH + H(+). It carries out the reaction xanthine + NAD(+) + H2O = urate + NADH + H(+). The protein operates within purine metabolism. Completely inhibited by allopurinol and significantly inhibited by adenine. Inhibited by Fe(2+), Cd(2+) and Zn(2+) and strongly inhibited by Cu(2+). Mg(2+) and Mo(2+) have no effect on activity. Its function is as follows. Key enzyme in purine degradation. Catalyzes the oxidation of hypoxanthine to xanthine. Catalyzes the oxidation of xanthine to uric acid. Oxidizes xanthine, hypoxanthine and pterine at high rates. Can also act on purine and guanine. This Blastobotrys adeninivorans (Yeast) protein is Xanthine dehydrogenase.